A 195-amino-acid polypeptide reads, in one-letter code: Segregation and condensation protein B (195 aa).

This sequence belongs to the ScpB family. In terms of assembly, homodimer. Homodimerization may be required to stabilize the binding of ScpA to the Smc head domains. Component of a cohesin-like complex composed of ScpA, ScpB and the Smc homodimer, in which ScpA and ScpB bind to the head domain of Smc. The presence of the three proteins is required for the association of the complex with DNA.

It is found in the cytoplasm. In terms of biological role, participates in chromosomal partition during cell division. May act via the formation of a condensin-like complex containing Smc and ScpA that pull DNA away from mid-cell into both cell halves. This Clostridium perfringens (strain SM101 / Type A) protein is Segregation and condensation protein B.